Consider the following 274-residue polypeptide: Undecaprenyl-diphosphatase (274 aa).

The next 6 helical transmembrane spans lie at 44–64, 85–105, 109–129, 185–205, 214–234, and 247–267; these read AKVF…LVYW, LNVV…GKMI, LFIP…ILWA, ATDF…AYSL, VADI…AWLC, and FIPF…TAWT.

The protein belongs to the UppP family.

It localises to the cell inner membrane. It catalyses the reaction di-trans,octa-cis-undecaprenyl diphosphate + H2O = di-trans,octa-cis-undecaprenyl phosphate + phosphate + H(+). Functionally, catalyzes the dephosphorylation of undecaprenyl diphosphate (UPP). Confers resistance to bacitracin. The sequence is that of Undecaprenyl-diphosphatase from Variovorax paradoxus (strain S110).